The primary structure comprises 279 residues: Diaminopimelate epimerase (279 aa).

Substrate is bound by residues Asn13 and Asn66. Cys75 serves as the catalytic Proton donor. Residues 76–77 (GN), Asn164, Asn197, and 215–216 (ER) each bind substrate. Cys224 acts as the Proton acceptor in catalysis. 225–226 (GT) contacts substrate.

This sequence belongs to the diaminopimelate epimerase family. In terms of assembly, homodimer.

It is found in the cytoplasm. It carries out the reaction (2S,6S)-2,6-diaminopimelate = meso-2,6-diaminopimelate. Its pathway is amino-acid biosynthesis; L-lysine biosynthesis via DAP pathway; DL-2,6-diaminopimelate from LL-2,6-diaminopimelate: step 1/1. Catalyzes the stereoinversion of LL-2,6-diaminopimelate (L,L-DAP) to meso-diaminopimelate (meso-DAP), a precursor of L-lysine and an essential component of the bacterial peptidoglycan. The protein is Diaminopimelate epimerase of Brachyspira hyodysenteriae (strain ATCC 49526 / WA1).